Here is a 640-residue protein sequence, read N- to C-terminus: 1,4-alpha-glucan branching enzyme GlgB (640 aa).

The Nucleophile role is filled by aspartate 318. The active-site Proton donor is the glutamate 371.

The protein belongs to the glycosyl hydrolase 13 family. GlgB subfamily. In terms of assembly, monomer.

It catalyses the reaction Transfers a segment of a (1-&gt;4)-alpha-D-glucan chain to a primary hydroxy group in a similar glucan chain.. It functions in the pathway glycan biosynthesis; glycogen biosynthesis. Catalyzes the formation of the alpha-1,6-glucosidic linkages in glycogen by scission of a 1,4-alpha-linked oligosaccharide from growing alpha-1,4-glucan chains and the subsequent attachment of the oligosaccharide to the alpha-1,6 position. This Francisella tularensis subsp. tularensis (strain FSC 198) protein is 1,4-alpha-glucan branching enzyme GlgB.